The chain runs to 107 residues: Anti-adapter protein IraM (107 aa).

This sequence belongs to the IraM/RssC family.

It localises to the cytoplasm. Inhibits RpoS proteolysis by regulating RssB activity, thereby increasing the stability of the sigma stress factor RpoS during magnesium starvation. The protein is Anti-adapter protein IraM of Shigella dysenteriae serotype 1 (strain Sd197).